The chain runs to 365 residues: U1 snRNP-associated protein usp109 (365 aa).

RRM domains follow at residues 3–79 (TSLW…VVPE), 86–162 (YMLF…SVKS), and 189–259 (TAVY…WARP).

As to quaternary structure, component of the U1 snRNP complex.

The protein resides in the nucleus. This is U1 snRNP-associated protein usp109 (usp109) from Schizosaccharomyces pombe (strain 972 / ATCC 24843) (Fission yeast).